Reading from the N-terminus, the 249-residue chain is Small ribosomal subunit protein uS2 (249 aa).

The protein belongs to the universal ribosomal protein uS2 family.

In Polynucleobacter asymbioticus (strain DSM 18221 / CIP 109841 / QLW-P1DMWA-1) (Polynucleobacter necessarius subsp. asymbioticus), this protein is Small ribosomal subunit protein uS2.